Here is a 239-residue protein sequence, read N- to C-terminus: Ribonuclease PH (239 aa).

Phosphate-binding positions include Arg-87 and 125-127 (GTR).

The protein belongs to the RNase PH family. Homohexameric ring arranged as a trimer of dimers.

It carries out the reaction tRNA(n+1) + phosphate = tRNA(n) + a ribonucleoside 5'-diphosphate. In terms of biological role, phosphorolytic 3'-5' exoribonuclease that plays an important role in tRNA 3'-end maturation. Removes nucleotide residues following the 3'-CCA terminus of tRNAs; can also add nucleotides to the ends of RNA molecules by using nucleoside diphosphates as substrates, but this may not be physiologically important. Probably plays a role in initiation of 16S rRNA degradation (leading to ribosome degradation) during starvation. The chain is Ribonuclease PH from Ectopseudomonas mendocina (strain ymp) (Pseudomonas mendocina).